The sequence spans 271 residues: Potential ATP-binding protein (271 aa).

An ATP-binding site is contributed by 34–41 (GQPGVGKT).

In Staphylococcus aureus, this protein is Potential ATP-binding protein.